Reading from the N-terminus, the 80-residue chain is Putative membrane protein insertion efficiency factor (80 aa).

Residues Ser60–Glu80 are disordered. The span at Thr62–Glu80 shows a compositional bias: basic and acidic residues.

It belongs to the UPF0161 family.

It is found in the cell membrane. Could be involved in insertion of integral membrane proteins into the membrane. The protein is Putative membrane protein insertion efficiency factor of Streptococcus pneumoniae serotype 4 (strain ATCC BAA-334 / TIGR4).